Consider the following 319-residue polypeptide: Putative GPI-anchor transamidase (319 aa).

Residues 1–16 form the signal peptide; the sequence is MRHVLLIFCAIIATEA. Catalysis depends on residues His-156 and Cys-198. Residue Asn-257 is glycosylated (N-linked (GlcNAc...) asparagine).

It belongs to the peptidase C13 family.

The protein operates within glycolipid biosynthesis; glycosylphosphatidylinositol-anchor biosynthesis. Mediates GPI anchoring in the endoplasmic reticulum, by replacing a protein's C-terminal GPI attachment signal peptide with a pre-assembled GPI. During this transamidation reaction, the GPI transamidase forms a carbonyl intermediate with the substrate protein. The protein is Putative GPI-anchor transamidase of Caenorhabditis elegans.